The following is a 264-amino-acid chain: Small ribosomal subunit protein eS1 (264 aa).

An N6-acetyllysine; alternate modification is found at Lys34. Lys34 is covalently cross-linked (Glycyl lysine isopeptide (Lys-Gly) (interchain with G-Cter in SUMO2); alternate). Residue Lys56 is modified to N6-acetyllysine. An ADP-ribosyltyrosine modification is found at Tyr155. A disordered region spans residues 232–264; the sequence is HGEGSSSGKATGDETGAKVERADGYEPPVQESV. A phosphoserine mark is found at Ser236 and Ser237. The segment covering 242-255 has biased composition (basic and acidic residues); that stretch reads TGDETGAKVERADG. An N6-acetyllysine; alternate modification is found at Lys249. Lys249 is covalently cross-linked (Glycyl lysine isopeptide (Lys-Gly) (interchain with G-Cter in SUMO2); alternate). The residue at position 256 (Tyr256) is a Phosphotyrosine. Ser263 is modified (phosphoserine).

Belongs to the eukaryotic ribosomal protein eS1 family. Component of the small ribosomal subunit. Mature ribosomes consist of a small (40S) and a large (60S) subunit. The 40S subunit contains about 33 different proteins and 1 molecule of RNA (18S). The 60S subunit contains about 49 different proteins and 3 molecules of RNA (28S, 5.8S and 5S). Identified in a IGF2BP1-dependent mRNP granule complex containing untranslated mRNAs. Binds with high affinity to IPO4. Interacts with DDIT3. Part of the small subunit (SSU) processome, composed of more than 70 proteins and the RNA chaperone small nucleolar RNA (snoRNA) U3. In terms of processing, ADP-ribosylated at Tyr-155 by PARP1 in presence of HPF1.

It localises to the cytoplasm. The protein localises to the nucleus. It is found in the nucleolus. Functionally, component of the small ribosomal subunit. The ribosome is a large ribonucleoprotein complex responsible for the synthesis of proteins in the cell. Part of the small subunit (SSU) processome, first precursor of the small eukaryotic ribosomal subunit. During the assembly of the SSU processome in the nucleolus, many ribosome biogenesis factors, an RNA chaperone and ribosomal proteins associate with the nascent pre-rRNA and work in concert to generate RNA folding, modifications, rearrangements and cleavage as well as targeted degradation of pre-ribosomal RNA by the RNA exosome. May play a role during erythropoiesis through regulation of transcription factor DDIT3. This is Small ribosomal subunit protein eS1 from Macaca fascicularis (Crab-eating macaque).